Here is a 422-residue protein sequence, read N- to C-terminus: UDP-N-acetylglucosamine 1-carboxyvinyltransferase 2 (422 aa).

Residue 22–23 (KN) coordinates phosphoenolpyruvate. R93 contacts UDP-N-acetyl-alpha-D-glucosamine. C117 serves as the catalytic Proton donor. C117 carries the 2-(S-cysteinyl)pyruvic acid O-phosphothioketal modification. Residues 122–126 (RPVDL), D308, and I330 contribute to the UDP-N-acetyl-alpha-D-glucosamine site.

The protein belongs to the EPSP synthase family. MurA subfamily.

It localises to the cytoplasm. It carries out the reaction phosphoenolpyruvate + UDP-N-acetyl-alpha-D-glucosamine = UDP-N-acetyl-3-O-(1-carboxyvinyl)-alpha-D-glucosamine + phosphate. The protein operates within cell wall biogenesis; peptidoglycan biosynthesis. In terms of biological role, cell wall formation. Adds enolpyruvyl to UDP-N-acetylglucosamine. This is UDP-N-acetylglucosamine 1-carboxyvinyltransferase 2 from Legionella pneumophila (strain Lens).